We begin with the raw amino-acid sequence, 174 residues long: Small ribosomal subunit protein uS5 (174 aa).

One can recognise an S5 DRBM domain in the interval Trp-18–Ile-81.

The protein belongs to the universal ribosomal protein uS5 family. In terms of assembly, part of the 30S ribosomal subunit. Contacts proteins S4 and S8.

With S4 and S12 plays an important role in translational accuracy. Its function is as follows. Located at the back of the 30S subunit body where it stabilizes the conformation of the head with respect to the body. This is Small ribosomal subunit protein uS5 from Trichormus variabilis (strain ATCC 29413 / PCC 7937) (Anabaena variabilis).